The following is a 479-amino-acid chain: ATP synthase subunit beta (479 aa).

Residue 158-165 participates in ATP binding; sequence GGAGLGKT.

It belongs to the ATPase alpha/beta chains family. F-type ATPases have 2 components, CF(1) - the catalytic core - and CF(0) - the membrane proton channel. CF(1) has five subunits: alpha(3), beta(3), gamma(1), delta(1), epsilon(1). CF(0) has three main subunits: a(1), b(2) and c(9-12). The alpha and beta chains form an alternating ring which encloses part of the gamma chain. CF(1) is attached to CF(0) by a central stalk formed by the gamma and epsilon chains, while a peripheral stalk is formed by the delta and b chains.

Its subcellular location is the cell inner membrane. It catalyses the reaction ATP + H2O + 4 H(+)(in) = ADP + phosphate + 5 H(+)(out). In terms of biological role, produces ATP from ADP in the presence of a proton gradient across the membrane. The catalytic sites are hosted primarily by the beta subunits. This chain is ATP synthase subunit beta, found in Rhodopirellula baltica (strain DSM 10527 / NCIMB 13988 / SH1).